Reading from the N-terminus, the 311-residue chain is Replicative helicase loader DnaI (311 aa).

The segment at Met-1–Ile-136 is N-terminal domain (Nd). Residues Cys-67, Cys-70, His-84, and Cys-101 each coordinate Zn(2+). A C-terminal domain (Cd) region spans residues Ser-137–Pro-311. Gly-168–Thr-175 provides a ligand contact to ATP.

This sequence belongs to the DnaI family. The DNA replisome assembles sequentially on oriC in this order; DnaA, DnaD, DnaB, DnaI-DnaC helicase. Monomer with a very minor amount of dimer in solution. Interacts with replicative helicase (from G.stearothermophilus, called DnaB); this interaction is disrupted by DnaD. Interacts with replicative helicase DnaC, forms a DnaC(6):DnaI(6) complex. Interacts with the helicase as 3 dimers. A stable complex with DnaG primase, DnaI(6):helicase(6):DnaG(3) fragment can be isolated; DnaI and DnaG do not contact each other (helicase and DnaG in this complex are derived from G.stearothermophilus). Requires Zn(2+) as cofactor.

It localises to the cytoplasm. The enzyme catalyses ATP + H2O = ADP + phosphate + H(+). Functionally, helps load the DnaC replicative helicase onto single-stranded (ss)DNA and simulates the helicase activity; in the presence of DnaB more helicase activity is seen. Regulates DnaC helicase activity, at low concentrations stimulates the DNA helicase and ATPase activities of DnaC. Has no measurable ATPase activity after 1 hour incubation of 6 uM DnaI with or without DNA. Another group has found the protein has weak ATPase activity that is not stimulated by ssDNA. Whole protein binds forked DNA (but not ssDNA) weakly; ATP and ADPNP (probably 5'-adenylyl beta, gamma-imidodiphosphate) have no effect on DNA binding. DnaB, DnaD and DnaI may be required for a PriA-independent pathway of replication fork restart. This is Replicative helicase loader DnaI from Bacillus subtilis (strain 168).